The sequence spans 413 residues: MNQKTSLLARIANGSLVLQIISGIILGVILASISTTGANNVAFLGSLFVGALKAIAPILVFVLVASSIANQKKNSQTNMRPIIGLYLLGTFVAALTAVLFSFAFPTTLLLTTGIEGTNPPQGISEVINTLLFKIVDNPVNALLTGNYIGILVWGAGLGITMHHASDSTKRMLSDVSDAVSNIVRFVIRLAPIGIFGLVAATFAETGFDALAGYGQLLMVLVGSMLFIALVINPIIVYVKIKRNPYPLVFKCLRESGVTAFFTRSSAANIPVNMALCEELKLHKDTYSVSIPLGATINMGGAAITITVLTLAAAHTLGIQVDFMTALLLSVIASVSACGASGVAGGSLLLIPLACSLFGISNDVAMQVVAVGFIIGVIQDSAETALNSSTDVIFTAAACEAAEAKEAKQAAQVS.

Helical transmembrane passes span 11–31 (IANG…VILA), 43–63 (FLGS…VFVL), 82–102 (IIGL…LFSF), 141–161 (ALLT…GITM), 192–212 (IGIF…ALAG), 216–236 (LLMV…PIIV), 298–318 (MGGA…TLGI), 339–359 (ASGV…LFGI), and 363–383 (VAMQ…SAET).

The protein belongs to the dicarboxylate/amino acid:cation symporter (DAACS) (TC 2.A.23) family.

Its subcellular location is the cell inner membrane. It carries out the reaction L-serine(in) + Na(+)(in) = L-serine(out) + Na(+)(out). The catalysed reaction is L-threonine(in) + Na(+)(in) = L-threonine(out) + Na(+)(out). Its function is as follows. Involved in the import of serine and threonine into the cell, with the concomitant import of sodium (symport system). This chain is Serine/threonine transporter SstT, found in Shewanella frigidimarina (strain NCIMB 400).